The chain runs to 254 residues: 3-deoxy-manno-octulosonate cytidylyltransferase (254 aa).

The protein belongs to the KdsB family.

Its subcellular location is the cytoplasm. The enzyme catalyses 3-deoxy-alpha-D-manno-oct-2-ulosonate + CTP = CMP-3-deoxy-beta-D-manno-octulosonate + diphosphate. It participates in nucleotide-sugar biosynthesis; CMP-3-deoxy-D-manno-octulosonate biosynthesis; CMP-3-deoxy-D-manno-octulosonate from 3-deoxy-D-manno-octulosonate and CTP: step 1/1. The protein operates within bacterial outer membrane biogenesis; lipopolysaccharide biosynthesis. In terms of biological role, activates KDO (a required 8-carbon sugar) for incorporation into bacterial lipopolysaccharide in Gram-negative bacteria. The polypeptide is 3-deoxy-manno-octulosonate cytidylyltransferase (Chlamydia caviae (strain ATCC VR-813 / DSM 19441 / 03DC25 / GPIC) (Chlamydophila caviae)).